We begin with the raw amino-acid sequence, 554 residues long: Chaperonin GroEL (554 aa).

ATP contacts are provided by residues 29–32 (TLGP), Lys50, 86–90 (DGTTT), Gly414, and Asp495.

Belongs to the chaperonin (HSP60) family. Forms a cylinder of 14 subunits composed of two heptameric rings stacked back-to-back. Interacts with the co-chaperonin GroES.

It localises to the cytoplasm. The enzyme catalyses ATP + H2O + a folded polypeptide = ADP + phosphate + an unfolded polypeptide.. Functionally, together with its co-chaperonin GroES, plays an essential role in assisting protein folding. The GroEL-GroES system forms a nano-cage that allows encapsulation of the non-native substrate proteins and provides a physical environment optimized to promote and accelerate protein folding. The chain is Chaperonin GroEL from Pelagibacter ubique (strain HTCC1062).